Consider the following 269-residue polypeptide: 4-hydroxy-tetrahydrodipicolinate reductase (269 aa).

NAD(+) is bound by residues 8-13 and glutamate 34; that span reads GAAGRM. An NADP(+)-binding site is contributed by arginine 35. NAD(+)-binding positions include 98–100 and 122–125; these read GTT and APNY. The Proton donor/acceptor role is filled by histidine 155. (S)-2,3,4,5-tetrahydrodipicolinate is bound at residue histidine 156. The Proton donor role is filled by lysine 159. 165 to 166 serves as a coordination point for (S)-2,3,4,5-tetrahydrodipicolinate; the sequence is GT.

This sequence belongs to the DapB family.

Its subcellular location is the cytoplasm. It catalyses the reaction (S)-2,3,4,5-tetrahydrodipicolinate + NAD(+) + H2O = (2S,4S)-4-hydroxy-2,3,4,5-tetrahydrodipicolinate + NADH + H(+). The catalysed reaction is (S)-2,3,4,5-tetrahydrodipicolinate + NADP(+) + H2O = (2S,4S)-4-hydroxy-2,3,4,5-tetrahydrodipicolinate + NADPH + H(+). Its pathway is amino-acid biosynthesis; L-lysine biosynthesis via DAP pathway; (S)-tetrahydrodipicolinate from L-aspartate: step 4/4. Functionally, catalyzes the conversion of 4-hydroxy-tetrahydrodipicolinate (HTPA) to tetrahydrodipicolinate. This is 4-hydroxy-tetrahydrodipicolinate reductase from Aliivibrio fischeri (strain ATCC 700601 / ES114) (Vibrio fischeri).